Reading from the N-terminus, the 180-residue chain is Cell division protein ZapC (180 aa).

This sequence belongs to the ZapC family. As to quaternary structure, interacts directly with FtsZ.

Its subcellular location is the cytoplasm. Contributes to the efficiency of the cell division process by stabilizing the polymeric form of the cell division protein FtsZ. Acts by promoting interactions between FtsZ protofilaments and suppressing the GTPase activity of FtsZ. This is Cell division protein ZapC from Vibrio vulnificus (strain CMCP6).